The following is a 624-amino-acid chain: MQPEPKPSGAPRSSQFLPLWSKCPEGAGDAVMYASTECKAEVTPSQDGNRTFSYTLEDHTKQAFGIMNELRLSQQLCDVTLQVKYEDIPAAQFMAHKVVLASSSPVFKAMFTNGLREQGMEVVSIEGIHPKVMERLIEFAYTASISVGEKCVLHVMNGAVMYQIDSVVRACSDFLVQQLDPSNAIGIANFAEQIGCTELHQRAREYIYMHFGEVAKQEEFFNLSHCQLATLISRDDLNVRCESEVFHACIDWVKYDCPQRRFYVQALLRAVRCHALTPRFLQTQLQKCEILQADARCKDYLVQIFQELTLHKPTQAVPCRAPKVGRLIYTAGGYFRQSLSYLEAYNPSNGSWLRLADLQVPRSGLAGCVVGGLLYAVGGRNNSPDGNTDSSALDCYNPMTNQWSPCASLSVPRNRSGGGVIDGHIYAVGGSHGCIHHSSVERYEPDRDEWHLVAPMLTRRIGVGVAVLNRLLYAVGGFDGTNRLNSAECYYPERNEWRMITPMNTIRSGAGVCVLHSCIYAAGGYDGQDQLNSVERYDVETETWTFVASMKHRRSALGIAVHQGRIYVLGGYDGHTFLDSVECYDPDTDTWSEVTRLTSGRSGVGVAVTMEPCRKQIDQQNCTC.

S-(2-succinyl)cysteine is present on C38. In terms of domain architecture, BTB spans 77 to 149 (CDVTLQVKYE…AYTASISVGE (73 aa)). R135 is covalently cross-linked (N5-[4-(S-L-cysteinyl)-5-methyl-1H-imidazol-2-yl]-L-ornithine (Arg-Cys) (interchain with C-151 in KEAP1)). 2 positions are modified to S-(2-succinyl)cysteine: C151 and C241. Residue C151 is modified to S-(2,3-dicarboxypropyl)cysteine; alternate. C151 is modified (S-nitrosocysteine; alternate). C151 is covalently cross-linked (N5-[4-(S-L-cysteinyl)-5-methyl-1H-imidazol-2-yl]-L-ornithine (Cys-Arg) (interchain with R-135 in KEAP1)). A BACK domain is found at 184-286 (AIGIANFAEQ…TPRFLQTQLQ (103 aa)). 2 positions are modified to S-(2,3-dicarboxypropyl)cysteine: C257 and C273. S-(2-succinyl)cysteine occurs at positions 288 and 319. The residue at position 288 (C288) is an S-(2,3-dicarboxypropyl)cysteine; alternate. 6 Kelch repeats span residues 327–372 (LIYT…VVGG), 373–423 (LLYA…VIDG), 424–470 (HIYA…VLNR), 471–517 (LLYA…VLHS), 519–564 (IYAA…VHQG), and 565–611 (RIYV…VTME). Residue C434 is modified to S-cGMP-cysteine. C613 is modified (S-(2-succinyl)cysteine).

It belongs to the KEAP1 family. In terms of assembly, component of the BCR(KEAP1) E3 ubiquitin ligase complex, at least composed of 2 molecules of CUL3, 2 molecules of KEAP1, and RBX1. Interacts with NFE2L2/NRF2; the interaction is direct. Forms a ternary complex with NFE2L2/NRF2 and PGAM5. Interacts with (phosphorylated) SQSTM1/p62; the interaction is direct and inactivates the BCR(KEAP1) complex by sequestering it in inclusion bodies, promoting its degradation. Interacts with NFE2L1. Interacts with BPTF and PTMA. Interacts with MAP1LC3B. Interacts indirectly with ENC1. Interacts with SESN1 and SESN2. Interacts with HSP90AA1 and HSP90AB1. Interacts with PGCKA1; this interaction prevents the ubiquitination of KEAP1 by TRIM25, thus protecting KEAP1 from degradation. In terms of processing, non-enzymatic covalent modifications of reactive cysteines by electrophile metabolites inactivate the BCR(KEAP1) complex. Accumulation of fumarate promotes the formation of cysteine S-succination (S-(2-succinyl)cysteine), leading to inactivate the BCR(KEAP1) complex and promote NFE2L2/NRF2 nuclear accumulation and activation. Nitric oxide-dependent 8-Nitro-cGMP formation promotes cysteine guanylation (S-cGMP-cysteine), leading to NFE2L2/NRF2 nuclear accumulation and activation. Itaconate, an anti-inflammatory metabolite generated in response to lipopolysaccharide, alkylates cysteines, activating NFE2L2/NRF2. Methylglyoxal, a reactive metabolite that accumulates when the glycolytic enzyme PGK1 is inhibited, promotes formation of a methylimidazole cross-link between proximal Cys-151 and Arg-135 on another KEAP1 molecule, resulting in an inactive dimer that inactivates the BCR(KEAP1) complex. Post-translationally, degraded via a proteasomal-independent process during selective autophagy: interaction with phosphorylated SQSTM1/p62 sequesters KEAP1 in inclusion bodies, leading to its degradation. Auto-ubiquitinated by the BCR(KEAP1) complex. Quinone-induced oxidative stress, but not sulforaphane, increases its ubiquitination. Ubiquitination and subsequent degradation is most pronounced following prolonged exposure of cells to oxidative stress, particularly in glutathione-deficient cells that are highly susceptible to oxidative stress. Deubiquitinated by USP25; leading to stabilization. Ubiquitinated by TRIM25; leading to degradation upon ER stress.

Its subcellular location is the cytoplasm. It is found in the nucleus. It participates in protein modification; protein ubiquitination. Its activity is regulated as follows. Ubiquitin ligase activity of the BCR(KEAP1) complex is inhibited by oxidative stress and electrophile metabolites such as sulforaphane. Electrophile metabolites react with reactive cysteine residues in KEAP1 and trigger non-enzymatic covalent modifications of these cysteine residues, leading to inactivate the ubiquitin ligase activity of the BCR(KEAP1) complex. Selective autophagy also inactivates the BCR(KEAP1) complex via interaction between KEAP1 and SQSTM1/p62, which sequesters the complex in inclusion bodies and promotes its degradation. Functionally, substrate-specific adapter of a BCR (BTB-CUL3-RBX1) E3 ubiquitin ligase complex that regulates the response to oxidative stress by targeting NFE2L2/NRF2 for ubiquitination. KEAP1 acts as a key sensor of oxidative and electrophilic stress: in normal conditions, the BCR(KEAP1) complex mediates ubiquitination and degradation of NFE2L2/NRF2, a transcription factor regulating expression of many cytoprotective genes. In response to oxidative stress, different electrophile metabolites trigger non-enzymatic covalent modifications of highly reactive cysteine residues in KEAP1, leading to inactivate the ubiquitin ligase activity of the BCR(KEAP1) complex, promoting NFE2L2/NRF2 nuclear accumulation and expression of phase II detoxifying enzymes. In response to selective autophagy, KEAP1 is sequestered in inclusion bodies following its interaction with SQSTM1/p62, leading to inactivation of the BCR(KEAP1) complex and activation of NFE2L2/NRF2. The BCR(KEAP1) complex also mediates ubiquitination of SQSTM1/p62, increasing SQSTM1/p62 sequestering activity and degradation. The BCR(KEAP1) complex also targets BPTF and PGAM5 for ubiquitination and degradation by the proteasome. This is Kelch-like ECH-associated protein 1 from Rattus norvegicus (Rat).